The following is a 412-amino-acid chain: Peptidase T (412 aa).

His-84 lines the Zn(2+) pocket. Asp-86 is a catalytic residue. Asp-146 lines the Zn(2+) pocket. The Proton acceptor role is filled by Glu-179. Residues Glu-180, Asp-202, and His-385 each coordinate Zn(2+).

This sequence belongs to the peptidase M20B family. Zn(2+) is required as a cofactor.

The protein localises to the cytoplasm. The enzyme catalyses Release of the N-terminal residue from a tripeptide.. In terms of biological role, cleaves the N-terminal amino acid of tripeptides. This Haemophilus influenzae (strain 86-028NP) protein is Peptidase T.